Consider the following 311-residue polypeptide: D-alanine--D-alanine ligase (311 aa).

The 196-residue stretch at 106 to 301 folds into the ATP-grasp domain; sequence KLLWRGAELP…FDELCWRILL (196 aa). 132–187 lines the ATP pocket; sequence IGSVGLPLMIKPAHEGSSIGMAKVERPEELEAARAEAARYDDLVLAERWIEGGEYT. Residues aspartate 255, glutamate 268, and asparagine 270 each contribute to the Mg(2+) site.

Belongs to the D-alanine--D-alanine ligase family. Mg(2+) is required as a cofactor. The cofactor is Mn(2+).

It is found in the cytoplasm. The enzyme catalyses 2 D-alanine + ATP = D-alanyl-D-alanine + ADP + phosphate + H(+). Its pathway is cell wall biogenesis; peptidoglycan biosynthesis. In terms of biological role, cell wall formation. The sequence is that of D-alanine--D-alanine ligase from Alkalilimnicola ehrlichii (strain ATCC BAA-1101 / DSM 17681 / MLHE-1).